The primary structure comprises 262 residues: Integral membrane protein 2B (262 aa).

Residues 1–49 (MVKVSFNSALAHKEAANKEEENSQVLILPPDAKEPEDVVVPAGHKRAWC) are Cytoplasmic-facing. The chain crosses the membrane as a helical; Signal-anchor for type II membrane protein span at residues 50 to 70 (WCMCFGLAFMLAGVILGGAYL). Residues 71–262 (YKYFAFQQGG…FAMETLICEQ (192 aa)) are Lumenal-facing. The BRICHOS domain occupies 132-226 (FADSDPADIV…LCRGKETYKL (95 aa)). 2 disulfides stabilise this stretch: Cys159-Cys218 and Cys243-Cys260. Asn165 is a glycosylation site (N-linked (GlcNAc...) asparagine).

Belongs to the ITM2 family. As to quaternary structure, homodimer; disulfide-linked. Expressed in areas of chondro-osteogenic transition and widely in the nervous system.

It localises to the golgi apparatus membrane. The protein resides in the cell membrane. The protein localises to the endosome membrane. In terms of biological role, plays a role in the induction of neurite outgrowth. In Gallus gallus (Chicken), this protein is Integral membrane protein 2B (ITM2B).